The chain runs to 184 residues: UPF0179 protein Pcal_2106 (184 aa).

Positions 146–161 are enriched in low complexity; sequence GASSAGISQAPSRVPL. The disordered stretch occupies residues 146-184; it reads GASSAGISQAPSRVPLSKPPSKSPSPQKSSPRGPTSRLP.

This sequence belongs to the UPF0179 family.

The chain is UPF0179 protein Pcal_2106 from Pyrobaculum calidifontis (strain DSM 21063 / JCM 11548 / VA1).